Reading from the N-terminus, the 459-residue chain is Cysteine--tRNA ligase (459 aa).

Cys-28 contacts Zn(2+). The 'HIGH' region signature appears at 30 to 40 (VTIYDLCHIGH). Cys-209, His-234, and Glu-238 together coordinate Zn(2+). The 'KMSKS' region signature appears at 266-270 (KMSKS). Position 269 (Lys-269) interacts with ATP.

This sequence belongs to the class-I aminoacyl-tRNA synthetase family. In terms of assembly, monomer. Zn(2+) is required as a cofactor.

The protein resides in the cytoplasm. It carries out the reaction tRNA(Cys) + L-cysteine + ATP = L-cysteinyl-tRNA(Cys) + AMP + diphosphate. This is Cysteine--tRNA ligase from Shewanella baltica (strain OS185).